The following is a 566-amino-acid chain: Beta-1,2-xylosyltransferease XAX1 (566 aa).

Positions 1-25 (MTSTAYSRPSKLPGGGNGSDRRLPP) are disordered. Over 1–43 (MTSTAYSRPSKLPGGGNGSDRRLPPRLMRGLTTKIEPKKLGVG) the chain is Cytoplasmic. Residues 44 to 64 (LLAGCCLALLTYVSLAKLFAI) traverse the membrane as a helical; Signal-anchor for type II membrane protein segment. Residues 65–566 (YSPVFASTAN…LLQALDRLQQ (502 aa)) are Lumenal-facing. Residue N74 is glycosylated (N-linked (GlcNAc...) asparagine). Residues 78 to 180 (LMQNSPPSSP…AAGGDTKIKC (103 aa)) form a disordered region. Positions 84-94 (PSSPETGPIPP) are enriched in pro residues. Residues N104, N368, N429, N515, and N549 are each glycosylated (N-linked (GlcNAc...) asparagine).

The protein belongs to the glycosyltransferase 61 family. Highly expressed in young panicles.

It is found in the golgi apparatus membrane. The protein operates within glycan metabolism. Functionally, glycosyltransferase involved in the xylosylation of xylan, the major hemicellulose (non-cellulosic component) of primary and secondary walls of angiosperms. Possesses beta-1,2-xylosyltransferase activity, transferring xylose from UDP-xylose to the xylan backbone. The chain is Beta-1,2-xylosyltransferease XAX1 from Oryza sativa subsp. japonica (Rice).